Reading from the N-terminus, the 366-residue chain is Mitochondrial division protein fszB (366 aa).

GTP is bound by residues 70-74 (GGGGN), 157-159 (GTG), E190, and D238.

The protein belongs to the FtsZ family.

It localises to the mitochondrion. Probably involved in mitochondrion division process. Binds to and hydrolyzes GTP. This chain is Mitochondrial division protein fszB (fszB), found in Dictyostelium discoideum (Social amoeba).